Consider the following 436-residue polypeptide: UPF0597 protein YhaM (436 aa).

Belongs to the UPF0597 family.

This is UPF0597 protein YhaM from Salmonella paratyphi B (strain ATCC BAA-1250 / SPB7).